A 265-amino-acid polypeptide reads, in one-letter code: 5'-nucleotidase SurE (265 aa).

A divalent metal cation is bound by residues Asp8, Asp9, Ser39, and Asn96.

It belongs to the SurE nucleotidase family. A divalent metal cation is required as a cofactor.

Its subcellular location is the cytoplasm. The enzyme catalyses a ribonucleoside 5'-phosphate + H2O = a ribonucleoside + phosphate. Nucleotidase that shows phosphatase activity on nucleoside 5'-monophosphates. This is 5'-nucleotidase SurE from Dehalococcoides mccartyi (strain ATCC BAA-2266 / KCTC 15142 / 195) (Dehalococcoides ethenogenes (strain 195)).